Reading from the N-terminus, the 237-residue chain is Phosphoribosylaminoimidazole-succinocarboxamide synthase (237 aa).

This sequence belongs to the SAICAR synthetase family.

It carries out the reaction 5-amino-1-(5-phospho-D-ribosyl)imidazole-4-carboxylate + L-aspartate + ATP = (2S)-2-[5-amino-1-(5-phospho-beta-D-ribosyl)imidazole-4-carboxamido]succinate + ADP + phosphate + 2 H(+). The protein operates within purine metabolism; IMP biosynthesis via de novo pathway; 5-amino-1-(5-phospho-D-ribosyl)imidazole-4-carboxamide from 5-amino-1-(5-phospho-D-ribosyl)imidazole-4-carboxylate: step 1/2. The polypeptide is Phosphoribosylaminoimidazole-succinocarboxamide synthase (Methanosarcina mazei (strain ATCC BAA-159 / DSM 3647 / Goe1 / Go1 / JCM 11833 / OCM 88) (Methanosarcina frisia)).